The sequence spans 529 residues: Protein PAT1 homolog 2 (529 aa).

The interval 153 to 183 (QILQQQQRWRRRRSPTARSVPAQKPWSREPA) is disordered.

It belongs to the PAT1 family. Interacts with LSM1.

Its subcellular location is the cytoplasm. The protein localises to the nucleus. In terms of biological role, RNA-binding protein that acts as a translational repressor. The protein is Protein PAT1 homolog 2 (Patl2) of Mus musculus (Mouse).